The sequence spans 386 residues: Paralemmin-1 (386 aa).

The stretch at 4 to 115 (VEANTLQQER…TKENLAEAAA (112 aa)) forms a coiled coil. 4 disordered regions span residues 21–40 (RKRQ…DRRQ), 51–149 (ERWL…PMKA), 240–290 (EATA…TMIF), and 321–378 (DAES…AKKQ). Composition is skewed to basic and acidic residues over residues 24 to 40 (QTEI…DRRQ) and 68 to 95 (AMKK…RELE). Over residues 97–116 (LENSSSVTSTKENLAEAAAP) the composition is skewed to low complexity. Basic and acidic residues-rich tracts occupy residues 259–282 (PRRE…EPSR), 322–334 (AESK…KDHA), and 365–377 (EAKE…DAKK). Residues cysteine 380 and cysteine 382 are each lipidated (S-palmitoyl cysteine). Cysteine 383 is modified (cysteine methyl ester). Cysteine 383 is lipidated: S-farnesyl cysteine. The propeptide at 384–386 (TVM) is removed in mature form.

The protein belongs to the paralemmin family. Interacts with dopamine receptor DRD3. Phosphorylated. In terms of tissue distribution, expressed in the lens (at protein level). Highly expressed in forebrain and cerebellum with lower expression in adrenal gland and heart. Expression weak or undetectable in other tissues.

Its subcellular location is the cell membrane. It is found in the cell projection. The protein localises to the filopodium membrane. It localises to the axon. The protein resides in the dendrite. Its subcellular location is the dendritic spine. It is found in the basolateral cell membrane. The protein localises to the apicolateral cell membrane. Involved in plasma membrane dynamics and cell process formation. Isoform 1 and isoform 2 are necessary for axonal and dendritic filopodia induction, for dendritic spine maturation and synapse formation in a palmitoylation-dependent manner. This chain is Paralemmin-1 (PALM), found in Gallus gallus (Chicken).